Reading from the N-terminus, the 80-residue chain is RNA-binding protein Hfq (80 aa).

One can recognise a Sm domain in the interval 10–70; sequence DAFLNQVRKE…ISTISPLRPV (61 aa).

Belongs to the Hfq family. In terms of assembly, homohexamer.

In terms of biological role, RNA chaperone that binds small regulatory RNA (sRNAs) and mRNAs to facilitate mRNA translational regulation in response to envelope stress, environmental stress and changes in metabolite concentrations. Also binds with high specificity to tRNAs. The chain is RNA-binding protein Hfq from Desulforamulus reducens (strain ATCC BAA-1160 / DSM 100696 / MI-1) (Desulfotomaculum reducens).